The chain runs to 710 residues: F-box/WD repeat-containing protein 7 (710 aa).

The segment at 1–158 (MNQELLSVGS…CSSVSDLPAH (158 aa)) is disordered. A Phosphoserine modification is found at S26. The span at 46–55 (RHQEEEHTAR) shows a compositional bias: basic and acidic residues. The segment covering 69–84 (QNDTQQGQVEENNNRF) has biased composition (polar residues). Acidic residues predominate over residues 87 to 132 (VDEDSSGNQEEQEEDEEHAGEQEEEEEEEEEEEEMDQESDDFDPSD). The span at 133-142 (DSSREDEHTH) shows a compositional bias: basic and acidic residues. Residues 143–158 (NSNVTNCSSVSDLPAH) show a composition bias toward polar residues. T208 carries the phosphothreonine modification. Position 230 is a phosphoserine; by SGK1 (S230). An F-box domain is found at 281-327 (RDFISLLPKELALYVLSFLEPKDLLQAAQTCRYWRILAEDNLLWREK). WD repeat units lie at residues 381-421 (GHDD…RTLV), 423-459 (HTGG…CIHT), 462-501 (GHTS…HVLM), 503-539 (HVAA…CLHT), 542-581 (GHTN…HTLT), 583-621 (HQSL…QTLQ), and 625-662 (KHQS…FIRN).

Homodimer; homodimerization plays a role in substrate binding and/or ubiquitination and degradation. Component of the SCF(FBXW7) complex consisting of CUL1, RBX1, SKP1 and FBXW7. Interacts (via F-box domain) with SKP1. Interacts (via F-box domain) with pseudophosphatase STYX; the interaction is direct and prevents FBXW7 interaction with SKP1. Interacts with cyclin-E (CCNE1 or CCNE2). Interacts with PSEN1. Forms a trimeric complex with NOTCH1 and SGK1. Interacts with NOTCH1 intracellular domain/NICD and NOTCH4 intracellular domain/NICD. Interacts with NOTCH2 intracellular domain (N2ICD). Interacts with MYC (when phosphorylated). Interacts with USP28, counteracting ubiquitination of MYC. Interacts (when phosphorylated at Thr-208) with PIN1, disrupting FBXW7 dimerization and promoting FBXW7 autoubiquitination and degradation. Interacts with UBE2QL1. Interacts with FAM83D; promotes FBXW7 degradation. Interacts with MYCN; FBXW7 competes with AURKA for binding to unphosphorylated MYCN but not for binding to phosphorylated MYCN. Interacts with JUN. Found in a complex with JUN and PRR7. Interacts with JUN and PRR7; the interaction inhibits ubiquitination-mediated JUN degradation, promoting its phosphorylation and transcriptional activity. Interacts with NFE2L1. Interacts with NR1D1. Interacts with RICTOR; mediates RICTOR ubiquitination and degradation. Interacts with USP38, counteracting ubiquitination of MYC. Post-translationally, phosphorylation at Thr-208 promotes interaction with PIN1, leading to disrupt FBXW7 dimerization and promoting FBXW7 autoubiquitination and degradation. Phosphorylated by ATM at Ser-26 in response to DNA damage, promoting recruitment to DNA damage sites and 'Lys-63'-linked ubiquitination of phosphorylated XRCC4. In terms of processing, ubiquitinated: autoubiquitinates following phosphorylation at Thr-208 and subsequent interaction with PIN1. Ubiquitination leads to its proteasomal degradation. In terms of tissue distribution, widely expressed with highest levels in brain, heart and testis.

It localises to the nucleus. The protein localises to the nucleoplasm. Its subcellular location is the chromosome. Its pathway is protein modification; protein ubiquitination. Functionally, substrate recognition component of a SCF (SKP1-CUL1-F-box protein) E3 ubiquitin-protein ligase complex which mediates the ubiquitination and subsequent proteasomal degradation of target proteins. Recognizes and binds phosphorylated sites/phosphodegrons within target proteins and thereafter brings them to the SCF complex for ubiquitination. Mediates ubiquitination and subsequent degradation of CCNE1 and MYC. Identified substrates include cyclin-E (CCNE1 or CCNE2), DISC1, JUN, MYC, NOTCH1 released notch intracellular domain (NICD), NOTCH2, MCL1, MLST8, RICTOR and probably PSEN1. Acts as a negative regulator of JNK signaling by binding to phosphorylated JUN and promoting its ubiquitination and subsequent degradation. SCF(FBXW7) complex mediates the ubiquitination and subsequent degradation of NFE2L1. Involved in bone homeostasis and negative regulation of osteoclast differentiation. Regulates the amplitude of the cyclic expression of hepatic core clock genes and genes involved in lipid and glucose metabolism via ubiquitination and proteasomal degradation of their transcriptional repressor NR1D1; CDK1-dependent phosphorylation of NR1D1 is necessary for SCF(FBXW7)-mediated ubiquitination. Also able to promote 'Lys-63'-linked ubiquitination in response to DNA damage. The SCF(FBXW7) complex facilitates double-strand break repair following phosphorylation by ATM: phosphorylation promotes localization to sites of double-strand breaks and 'Lys-63'-linked ubiquitination of phosphorylated XRCC4, enhancing DNA non-homologous end joining. This is F-box/WD repeat-containing protein 7 from Mus musculus (Mouse).